The sequence spans 225 residues: Small ribosomal subunit protein uS2 (225 aa).

Residues 1–14 (MAEAKPAPEKEAAA) are compositionally biased toward basic and acidic residues. Positions 1–33 (MAEAKPAPEKEAAAKTESVPVETEGEGPSVKEG) are disordered.

Belongs to the universal ribosomal protein uS2 family.

The polypeptide is Small ribosomal subunit protein uS2 (Methanosarcina barkeri (strain Fusaro / DSM 804)).